The primary structure comprises 278 residues: Dermonecrotic toxin LhSicTox-alphaIV1iii (278 aa).

H5 is a catalytic residue. 2 residues coordinate Mg(2+): E25 and D27. The active-site Nucleophile is H41. 2 disulfide bridges follow: C45-C51 and C47-C192. D85 contacts Mg(2+).

Belongs to the arthropod phospholipase D family. Class II subfamily. Mg(2+) is required as a cofactor. Expressed by the venom gland.

It is found in the secreted. It carries out the reaction an N-(acyl)-sphingosylphosphocholine = an N-(acyl)-sphingosyl-1,3-cyclic phosphate + choline. It catalyses the reaction an N-(acyl)-sphingosylphosphoethanolamine = an N-(acyl)-sphingosyl-1,3-cyclic phosphate + ethanolamine. The enzyme catalyses a 1-acyl-sn-glycero-3-phosphocholine = a 1-acyl-sn-glycero-2,3-cyclic phosphate + choline. The catalysed reaction is a 1-acyl-sn-glycero-3-phosphoethanolamine = a 1-acyl-sn-glycero-2,3-cyclic phosphate + ethanolamine. Functionally, dermonecrotic toxins cleave the phosphodiester linkage between the phosphate and headgroup of certain phospholipids (sphingolipid and lysolipid substrates), forming an alcohol (often choline) and a cyclic phosphate. This toxin acts on sphingomyelin (SM). It may also act on ceramide phosphoethanolamine (CPE), lysophosphatidylcholine (LPC) and lysophosphatidylethanolamine (LPE), but not on lysophosphatidylserine (LPS), and lysophosphatidylglycerol (LPG). It acts by transphosphatidylation, releasing exclusively cyclic phosphate products as second products. Induces dermonecrosis, hemolysis, increased vascular permeability, edema, inflammatory response, and platelet aggregation. The chain is Dermonecrotic toxin LhSicTox-alphaIV1iii from Loxosceles hirsuta (Recluse spider).